We begin with the raw amino-acid sequence, 175 residues long: Ribulose bisphosphate carboxylase small subunit, chloroplastic 2 (175 aa).

A chloroplast-targeting transit peptide spans 1–46 (MAPAVMASSATTVAPFQGLKSTAGLPISCRSGSTGLSSVSNGGRIR).

Belongs to the RuBisCO small chain family. As to quaternary structure, heterohexadecamer of 8 large and 8 small subunits.

It localises to the plastid. The protein localises to the chloroplast. RuBisCO catalyzes two reactions: the carboxylation of D-ribulose 1,5-bisphosphate, the primary event in carbon dioxide fixation, as well as the oxidative fragmentation of the pentose substrate. Both reactions occur simultaneously and in competition at the same active site. Although the small subunit is not catalytic it is essential for maximal activity. The polypeptide is Ribulose bisphosphate carboxylase small subunit, chloroplastic 2 (Triticum aestivum (Wheat)).